Here is a 148-residue protein sequence, read N- to C-terminus: Large ribosomal subunit protein bL9 (148 aa).

Belongs to the bacterial ribosomal protein bL9 family.

Functionally, binds to the 23S rRNA. In Geobacter metallireducens (strain ATCC 53774 / DSM 7210 / GS-15), this protein is Large ribosomal subunit protein bL9.